Consider the following 503-residue polypeptide: MSKLSDNHSSASEGEKEAGDLESGPTAISSEPSFDDADRDPNLITWDGPKDPENPKNWPKGLRWKNTWTVSLFVFISPVSSSMIAPAMSDLAKSLGMHAEIEIYLSLSIFILAYSIGPIFFGPASELYGRVRLLQISNVWYLAWNLGCGFATTKGQLFAFRFLAGIGGSAPLAIGGGAISDMWTAEERGKAMGVYTLGPLLGPVVGPIAGGFIAEYSTWRWVFWSTSAAALAVQVVGFFWLQECHPGTLLRKRRDRLAKETGNENLHTAEKVETLGYKLLHAFERPVKMFTTQPIVFCMAIYMAYLFGISYLMFATFPEIWTVVYHESPGIGGLNYLSIAIGSFIGLFFNLKLVDRIYRSLKARNNGVGKPEYRMPSLAVGSVISTIGLFWYGWSIGNTHWIMPNIGALIFAMGTISCLQGMQTYIVDSYQTYAASAMAACAVLRSLCGFGFPLFAPYMYNSLGYGWGTSLLAFITMVVGWGAPFAFWHFGPRLRAMSKYASG.

The segment at 1–59 (MSKLSDNHSSASEGEKEAGDLESGPTAISSEPSFDDADRDPNLITWDGPKDPENPKNWP) is disordered. An N-linked (GlcNAc...) asparagine glycan is attached at Asn7. Helical transmembrane passes span 68 to 88 (WTVSLFVFISPVSSSMIAPAM), 101 to 121 (IEIYLSLSIFILAYSIGPIFF), 133 to 153 (LLQISNVWYLAWNLGCGFATT), 162 to 182 (FLAGIGGSAPLAIGGGAISDM), 194 to 214 (VYTLGPLLGPVVGPIAGGFIA), 221 to 241 (WVFWSTSAAALAVQVVGFFWL), 295 to 315 (IVFCMAIYMAYLFGISYLMFA), 329 to 349 (PGIGGLNYLSIAIGSFIGLFF), 377 to 397 (SLAVGSVISTIGLFWYGWSIG), 401 to 421 (WIMPNIGALIFAMGTISCLQG), 432 to 454 (TYAASAMAACAVLRSLCGFGFPL), and 471 to 491 (LLAFITMVVGWGAPFAFWHFG).

Belongs to the major facilitator superfamily.

The protein resides in the membrane. Efflux pump; part of the gene cluster that mediates the biosynthesis of viridicatumtoxin, a tetracycline-like fungal meroterpenoid with a unique, fused spirobicyclic ring system. The sequence is that of Efflux pump vrtL from Penicillium aethiopicum.